Reading from the N-terminus, the 205-residue chain is Protein MIS12 homolog (205 aa).

The stretch at 108 to 205 (PYSEEDFQHL…EKESKRLKIS (98 aa)) forms a coiled coil.

The protein belongs to the mis12 family. Component of the MIS12 complex composed of MIS12, DSN1, NSL1 and PMF1. Also interacts with KNL1, CBX3, CBX5, NDC80 and ZWINT.

It is found in the chromosome. The protein localises to the centromere. Its subcellular location is the kinetochore. Part of the MIS12 complex which is required for normal chromosome alignment and segregation and for kinetochore formation during mitosis. Essential for proper kinetochore microtubule attachments. This Homo sapiens (Human) protein is Protein MIS12 homolog.